The following is a 190-amino-acid chain: Peptidyl-tRNA hydrolase (190 aa).

Tyr-14 contacts tRNA. Catalysis depends on His-19, which acts as the Proton acceptor. The tRNA site is built by Tyr-64, Asn-66, and Asn-112.

Belongs to the PTH family. As to quaternary structure, monomer.

The protein resides in the cytoplasm. It catalyses the reaction an N-acyl-L-alpha-aminoacyl-tRNA + H2O = an N-acyl-L-amino acid + a tRNA + H(+). In terms of biological role, hydrolyzes ribosome-free peptidyl-tRNAs (with 1 or more amino acids incorporated), which drop off the ribosome during protein synthesis, or as a result of ribosome stalling. Functionally, catalyzes the release of premature peptidyl moieties from peptidyl-tRNA molecules trapped in stalled 50S ribosomal subunits, and thus maintains levels of free tRNAs and 50S ribosomes. This chain is Peptidyl-tRNA hydrolase, found in Chlorobium luteolum (strain DSM 273 / BCRC 81028 / 2530) (Pelodictyon luteolum).